The sequence spans 1344 residues: Protein stu1 (1344 aa).

Residues 93–131 (LYPLLVERLGDHKERIRAQAAQSFTDMWLAAPEEVEQCV) form an HEAT 1 repeat. The tract at residues 265–292 (HRPVSRAETQASRSVSRLDTHQRPASRM) is disordered. An HEAT 2 repeat occupies 508–544 (VTFTTRILQHVSGACQDKNVQLRLFAAGWLKTLIQKQ). Disordered stretches follow at residues 606-637 (RSLL…ANGT), 651-847 (AAQK…STPR), 914-945 (LTEN…ESVP), 984-1004 (PVTH…LSSS), and 1031-1054 (SLPH…PSQR). 2 stretches are compositionally biased toward polar residues: residues 691–705 (VRTV…SLSS) and 735–747 (ATDS…NQID). The segment covering 748-769 (GSPSAAKSKSSTPSLKSVSSTG) has biased composition (low complexity). 2 stretches are compositionally biased toward polar residues: residues 828 to 847 (FSVT…STPR) and 914 to 942 (LTEN…NQDE). Low complexity predominate over residues 995–1004 (SSKPSGLSSS).

Belongs to the CLASP family. In terms of assembly, interacts with microtubules.

The protein resides in the cytoplasm. It localises to the cytoskeleton. It is found in the nucleus. The protein localises to the spindle. Functionally, microtubule binding protein that promotes the stabilization of dynamic microtubules. Required for mitotic spindle formation. This Aspergillus fumigatus (strain ATCC MYA-4609 / CBS 101355 / FGSC A1100 / Af293) (Neosartorya fumigata) protein is Protein stu1 (stu1).